The chain runs to 84 residues: Small ribosomal subunit protein bS20 (84 aa).

The protein belongs to the bacterial ribosomal protein bS20 family.

Binds directly to 16S ribosomal RNA. The sequence is that of Small ribosomal subunit protein bS20 from Limosilactobacillus fermentum (strain NBRC 3956 / LMG 18251) (Lactobacillus fermentum).